The chain runs to 275 residues: MPELPEVEVTRRGIEPFVAGRRVERVDVRTAMLRWPVPAGLAEQLRAREVLAVERRGKYLLFEVDAGWFIVHLGMTGTLRVLPAAGVPVAAKHDHIDWIFDEFVLRFRDPRRFGAVLWHPREAGDVHAHPLLASLGVEPFSPAFTGALLHARTRGRTVSVKQALLAGDMVVGVGNIYASESLFRAGIRPTTAAGKVSLPRYERLADAVRATLADAIERGGSTLRDFVGSNGESGYFQLDCFVYDRAGQPCRVCGTPIRQIVQGQRSTYYCPTCQR.

Proline 2 acts as the Schiff-base intermediate with DNA in catalysis. Catalysis depends on glutamate 3, which acts as the Proton donor. Lysine 58 (proton donor; for beta-elimination activity) is an active-site residue. Residues histidine 93, arginine 111, and arginine 156 each coordinate DNA. The FPG-type zinc finger occupies 241–275 (FVYDRAGQPCRVCGTPIRQIVQGQRSTYYCPTCQR). Arginine 265 functions as the Proton donor; for delta-elimination activity in the catalytic mechanism.

This sequence belongs to the FPG family. As to quaternary structure, monomer. It depends on Zn(2+) as a cofactor.

The catalysed reaction is Hydrolysis of DNA containing ring-opened 7-methylguanine residues, releasing 2,6-diamino-4-hydroxy-5-(N-methyl)formamidopyrimidine.. The enzyme catalyses 2'-deoxyribonucleotide-(2'-deoxyribose 5'-phosphate)-2'-deoxyribonucleotide-DNA = a 3'-end 2'-deoxyribonucleotide-(2,3-dehydro-2,3-deoxyribose 5'-phosphate)-DNA + a 5'-end 5'-phospho-2'-deoxyribonucleoside-DNA + H(+). Functionally, involved in base excision repair of DNA damaged by oxidation or by mutagenic agents. Acts as a DNA glycosylase that recognizes and removes damaged bases. Has a preference for oxidized purines, such as 7,8-dihydro-8-oxoguanine (8-oxoG). Has AP (apurinic/apyrimidinic) lyase activity and introduces nicks in the DNA strand. Cleaves the DNA backbone by beta-delta elimination to generate a single-strand break at the site of the removed base with both 3'- and 5'-phosphates. The chain is Formamidopyrimidine-DNA glycosylase from Burkholderia cenocepacia (strain ATCC BAA-245 / DSM 16553 / LMG 16656 / NCTC 13227 / J2315 / CF5610) (Burkholderia cepacia (strain J2315)).